A 550-amino-acid chain; its full sequence is Hydroxylamine reductase (550 aa).

Residues C3, C6, C18, and C25 each coordinate [2Fe-2S] cluster. Hybrid [4Fe-2O-2S] cluster is bound by residues H249, E273, C317, C405, C433, C458, E492, and K494. Residue C405 is modified to Cysteine persulfide.

This sequence belongs to the HCP family. The cofactor is [2Fe-2S] cluster. Hybrid [4Fe-2O-2S] cluster is required as a cofactor.

It localises to the cytoplasm. It catalyses the reaction A + NH4(+) + H2O = hydroxylamine + AH2 + H(+). Catalyzes the reduction of hydroxylamine to form NH(3) and H(2)O. This is Hydroxylamine reductase from Escherichia coli O6:H1 (strain CFT073 / ATCC 700928 / UPEC).